Reading from the N-terminus, the 187-residue chain is Corticoliberin (187 aa).

Positions 1-19 (MRLRLLVSAGMLLVALSSC) are cleaved as a signal peptide. Residues 20–144 (LPCRALLSRG…HQGALERERR (125 aa)) constitute a propeptide that is removed on maturation. 2 disordered regions span residues 75-94 (AARL…SRPS) and 114-146 (QRSL…RRSE). Residues 117–129 (LDSRAEPAERGAE) are compositionally biased toward basic and acidic residues. I185 carries the post-translational modification Isoleucine amide.

It belongs to the sauvagine/corticotropin-releasing factor/urotensin I family. As to quaternary structure, interacts (via C-terminus) with CRFR1 (via N-terminal extracellular domain). Expressed in parvocellular paraventricular nucleus of the hypothalamus and in medial accessory olivary nucleus.

It localises to the secreted. Its function is as follows. Hormone regulating the release of corticotropin from pituitary gland. Induces NLRP6 in intestinal epithelial cells, hence may influence gut microbiota profile. The protein is Corticoliberin (Crh) of Mus musculus (Mouse).